Reading from the N-terminus, the 453-residue chain is Validoxylamine A glucosyltransferase (453 aa).

This sequence belongs to the glycosyltransferase 2 family. Requires Mn(2+) as cofactor.

The enzyme catalyses validoxylamine A + UDP-alpha-D-glucose = validamycin A + UDP + H(+). Functionally, involved in the biosynthesis of the antifungal agent validamycin A. Catalyzes the final attachment of glucose from UDP-alpha-D-glucose to validoxylamine A to yield validamycin A. This Streptomyces hygroscopicus subsp. limoneus protein is Validoxylamine A glucosyltransferase.